The chain runs to 813 residues: Receptor-like protein 48 (813 aa).

The signal sequence occupies residues 1–30; the sequence is MHSCSERRMMTVIWSLCLIFCLSNSILAIA. The Extracellular segment spans residues 31 to 786; sequence KDLCLPDQRD…EDEEKEEKNQ (756 aa). N-linked (GlcNAc...) asparagine glycosylation is found at asparagine 69, asparagine 105, and asparagine 123. LRR repeat units lie at residues 111 to 134, 136 to 159, and 160 to 182; these read LQHLQSLELSSNNISGILPDSIGN, KYLRSLSFRTCHLFGKIPSSLGSL, and SYLTHLDLSYNDFTSEGPDSGGN. Asparagine 195 and asparagine 216 each carry an N-linked (GlcNAc...) asparagine glycan. 21 LRR repeats span residues 196 to 219, 220 to 244, 245 to 260, 261 to 285, 288 to 310, 311 to 335, 336 to 359, 361 to 381, 382 to 405, 406 to 432, 434 to 450, 451 to 473, 475 to 498, 500 to 521, 523 to 544, 545 to 571, 572 to 595, 642 to 666, 667 to 690, 691 to 714, and 716 to 739; these read LSSVTWIDLGSNQLKGMLPSNMSS, LSKLVSFDISENSFSGSIPSSLFMI, PSLNFSGPLEIGNISS, HSELGYLYMGENNFNGPIPGSLSKL, LRDLSLSFWNTGRGIVDFSIFLH, LKSLCSLDLSYLNTRSMVDLSFFSH, LMSLDELDLSGINLKISSTLSFPS, TGTLILASCNIVEFPKFLENQ, TSLFYLDISANHIEGQVPEWLWRL, PTLSFVNIAQNSFSGELPMLPNSIYSF, ASDNQFSGEIPRTVCEL, VSLNTLVLSNNKFSGSIPRCFEN, KTISILHLRNNSLSGVFPKEIISE, LTSLDVGHNWLSGQLPKSLIKC, DLEFLNVEDNRINDKFPFWLRS, LSNLQILVLRSNEFYGPIFSLEDSLSF, PKLRIFDISENHFTGVLPSDYFAG, FTIYKTIDVSGNRLEGDIPESIGIL, KELIVLNMSNNAFTGHIPPSLSNL, SNLQSLDLSQNRLSGSIPPELGKL, and FLEWMNFSYNRLEGPIPQATQIQS. 2 N-linked (GlcNAc...) asparagine glycosylation sites follow: asparagine 248 and asparagine 257. The N-linked (GlcNAc...) asparagine glycan is linked to asparagine 380. Asparagine 484 carries an N-linked (GlcNAc...) asparagine glycan. 2 N-linked (GlcNAc...) asparagine glycosylation sites follow: asparagine 673 and asparagine 689. 2 N-linked (GlcNAc...) asparagine glycosylation sites follow: asparagine 721 and asparagine 741. The tract at residues 756–785 is disordered; that stretch reads FLNKCGGEEEEEEEATKQEEDEDEEKEEKN. Acidic residues predominate over residues 763–781; it reads EEEEEEEATKQEEDEDEEK. Residues 787–807 traverse the membrane as a helical segment; that stretch reads VFSWIAAAIGYVPGVFCGLTI. The Cytoplasmic portion of the chain corresponds to 808–813; the sequence is AHILTS.

This sequence belongs to the RLP family.

Its subcellular location is the cell membrane. In terms of biological role, plays a role in root hair development. The polypeptide is Receptor-like protein 48 (Arabidopsis thaliana (Mouse-ear cress)).